Reading from the N-terminus, the 428-residue chain is D-amino acid dehydrogenase (428 aa).

3–17 contacts FAD; sequence VVILGSGVVGVASAY.

Belongs to the DadA oxidoreductase family. Requires FAD as cofactor.

The enzyme catalyses a D-alpha-amino acid + A + H2O = a 2-oxocarboxylate + AH2 + NH4(+). It functions in the pathway amino-acid degradation; D-alanine degradation; NH(3) and pyruvate from D-alanine: step 1/1. Oxidative deamination of D-amino acids. This chain is D-amino acid dehydrogenase, found in Burkholderia pseudomallei (strain 1106a).